The following is a 483-amino-acid chain: tRNA sulfurtransferase (483 aa).

Residues 61-165 (EAVCDALTRI…DDKLILVNAR (105 aa)) form the THUMP domain. ATP contacts are provided by residues 183-184 (LI), Lys-265, Gly-287, and Gln-296. Residues Cys-344 and Cys-456 are joined by a disulfide bond. Positions 404-483 (FATNDVVLDI…FNNVKVYRKK (80 aa)) constitute a Rhodanese domain. The active-site Cysteine persulfide intermediate is the Cys-456.

Belongs to the ThiI family.

The protein localises to the cytoplasm. The catalysed reaction is [ThiI sulfur-carrier protein]-S-sulfanyl-L-cysteine + a uridine in tRNA + 2 reduced [2Fe-2S]-[ferredoxin] + ATP + H(+) = [ThiI sulfur-carrier protein]-L-cysteine + a 4-thiouridine in tRNA + 2 oxidized [2Fe-2S]-[ferredoxin] + AMP + diphosphate. It catalyses the reaction [ThiS sulfur-carrier protein]-C-terminal Gly-Gly-AMP + S-sulfanyl-L-cysteinyl-[cysteine desulfurase] + AH2 = [ThiS sulfur-carrier protein]-C-terminal-Gly-aminoethanethioate + L-cysteinyl-[cysteine desulfurase] + A + AMP + 2 H(+). The protein operates within cofactor biosynthesis; thiamine diphosphate biosynthesis. In terms of biological role, catalyzes the ATP-dependent transfer of a sulfur to tRNA to produce 4-thiouridine in position 8 of tRNAs, which functions as a near-UV photosensor. Also catalyzes the transfer of sulfur to the sulfur carrier protein ThiS, forming ThiS-thiocarboxylate. This is a step in the synthesis of thiazole, in the thiamine biosynthesis pathway. The sulfur is donated as persulfide by IscS. The protein is tRNA sulfurtransferase of Proteus mirabilis (strain HI4320).